The sequence spans 474 residues: MTKKLHIKTWGCQMNEYDSSKMADLLDATHGYQLTDVAEEADVLLLNTCSIREKAQEKVFHQLGRWKLLKEKNPDLIIGVGGCVASQEGEHIRQRAHYVDIIFGPQTLHRLPEMINSVRGDRSPVVDISFPEIEKFDRLPEPRAEGPTAFVSIMEGCNKYCTYCVVPYTRGEEVSRPSDDILFEIAQLAAQGVREVNLLGQNVNAWRGENYDGSTGSFADLLRLVAAIDGIDRIRFTTSHPIEFTDDIIEVYRDTPELVSFLHLPVQSGSDRILNLMGRTHTALEYKAIIRKLRAARPDIQISSDFIVGFPGETTEDFEKTMKLIADVNFDMSYSFIFSARPGTPAADMVDDVPEEEKKQRLYILQERINQQAMAWSRRMLGTTQRILVEGTSRKSIMELSGRTENNRVVNFEGTPDMIGKFVDVEITDVYPNSLRGKVVRTEDEMGLRVAETPESVIARTRKENDLGVGYYQP.

The region spanning 3 to 120 (KKLHIKTWGC…LPEMINSVRG (118 aa)) is the MTTase N-terminal domain. Residues cysteine 12, cysteine 49, cysteine 83, cysteine 157, cysteine 161, and cysteine 164 each coordinate [4Fe-4S] cluster. Positions 143 to 375 (RAEGPTAFVS…QERINQQAMA (233 aa)) constitute a Radical SAM core domain. Residues 378–441 (RRMLGTTQRI…PNSLRGKVVR (64 aa)) form the TRAM domain.

This sequence belongs to the methylthiotransferase family. MiaB subfamily. In terms of assembly, monomer. [4Fe-4S] cluster is required as a cofactor.

It is found in the cytoplasm. It catalyses the reaction N(6)-dimethylallyladenosine(37) in tRNA + (sulfur carrier)-SH + AH2 + 2 S-adenosyl-L-methionine = 2-methylsulfanyl-N(6)-dimethylallyladenosine(37) in tRNA + (sulfur carrier)-H + 5'-deoxyadenosine + L-methionine + A + S-adenosyl-L-homocysteine + 2 H(+). In terms of biological role, catalyzes the methylthiolation of N6-(dimethylallyl)adenosine (i(6)A), leading to the formation of 2-methylthio-N6-(dimethylallyl)adenosine (ms(2)i(6)A) at position 37 in tRNAs that read codons beginning with uridine. The chain is tRNA-2-methylthio-N(6)-dimethylallyladenosine synthase from Shigella boydii serotype 4 (strain Sb227).